The chain runs to 150 residues: uncharacterized protein (150 aa).

An HTH asnC-type domain is found at 5 to 66 (LDRTDKMLLE…KPNYKKLNLG (62 aa)). Residues 24–43 (IAALSKKLGIPRTTVHYRIK) constitute a DNA-binding region (H-T-H motif).

This is an uncharacterized protein from Pyrococcus furiosus (strain ATCC 43587 / DSM 3638 / JCM 8422 / Vc1).